Reading from the N-terminus, the 508-residue chain is UDP-N-acetylmuramoyl-L-alanyl-D-glutamate--2,6-diaminopimelate ligase (508 aa).

Residue S33 coordinates UDP-N-acetyl-alpha-D-muramoyl-L-alanyl-D-glutamate. Residue 121–127 participates in ATP binding; the sequence is GTNGKST. Residues N162, 163 to 164, S190, Q196, and R198 each bind UDP-N-acetyl-alpha-D-muramoyl-L-alanyl-D-glutamate; that span reads TT. K230 carries the N6-carboxylysine modification. Residues R399, 423–426, G474, and E478 contribute to the meso-2,6-diaminopimelate site; that span reads DNPR. Residues 423–426 carry the Meso-diaminopimelate recognition motif motif; the sequence is DNPR.

The protein belongs to the MurCDEF family. MurE subfamily. Mg(2+) is required as a cofactor. Carboxylation is probably crucial for Mg(2+) binding and, consequently, for the gamma-phosphate positioning of ATP.

The protein localises to the cytoplasm. It carries out the reaction UDP-N-acetyl-alpha-D-muramoyl-L-alanyl-D-glutamate + meso-2,6-diaminopimelate + ATP = UDP-N-acetyl-alpha-D-muramoyl-L-alanyl-gamma-D-glutamyl-meso-2,6-diaminopimelate + ADP + phosphate + H(+). Its pathway is cell wall biogenesis; peptidoglycan biosynthesis. Catalyzes the addition of meso-diaminopimelic acid to the nucleotide precursor UDP-N-acetylmuramoyl-L-alanyl-D-glutamate (UMAG) in the biosynthesis of bacterial cell-wall peptidoglycan. The polypeptide is UDP-N-acetylmuramoyl-L-alanyl-D-glutamate--2,6-diaminopimelate ligase (Buchnera aphidicola subsp. Baizongia pistaciae (strain Bp)).